Reading from the N-terminus, the 315-residue chain is MQIKLANPRGFCAGVDRAIEIVNRALEVFGPPIYVRHEVVHNKFVVEDLRSRGAIFVEELEQVPDDVIVIFSAHGVSQAVRTEAAGRGLKVFDATCPLVTKVHIEVARYSRDGRECILIGHAGHPEVEGTMGQYDAVNGGAIYLVEDEADVASLEVRNPESLAFVTQTTLSMDDTSRVIDALRKRFPAIGGPRKDDICYATQNRQDAVKQLADECDVVLVVGSPNSSNSNRLRELAERMATPAYLIDGAEDMQKGWFDGVERIGITAGASAPEVLVRGVIQQLQAWGATGADELAGREENITFSMPKELRVKSLL.

[4Fe-4S] cluster is bound at residue Cys-12. The (2E)-4-hydroxy-3-methylbut-2-enyl diphosphate site is built by His-41 and His-74. Residues His-41 and His-74 each contribute to the dimethylallyl diphosphate site. Isopentenyl diphosphate is bound by residues His-41 and His-74. Cys-96 provides a ligand contact to [4Fe-4S] cluster. His-124 is a (2E)-4-hydroxy-3-methylbut-2-enyl diphosphate binding site. Position 124 (His-124) interacts with dimethylallyl diphosphate. Residue His-124 participates in isopentenyl diphosphate binding. Glu-126 serves as the catalytic Proton donor. Thr-168 contributes to the (2E)-4-hydroxy-3-methylbut-2-enyl diphosphate binding site. Cys-198 lines the [4Fe-4S] cluster pocket. Ser-226, Ser-227, Asn-228, and Ser-270 together coordinate (2E)-4-hydroxy-3-methylbut-2-enyl diphosphate. Dimethylallyl diphosphate is bound by residues Ser-226, Ser-227, Asn-228, and Ser-270. 4 residues coordinate isopentenyl diphosphate: Ser-226, Ser-227, Asn-228, and Ser-270.

It belongs to the IspH family. Requires [4Fe-4S] cluster as cofactor.

It carries out the reaction isopentenyl diphosphate + 2 oxidized [2Fe-2S]-[ferredoxin] + H2O = (2E)-4-hydroxy-3-methylbut-2-enyl diphosphate + 2 reduced [2Fe-2S]-[ferredoxin] + 2 H(+). It catalyses the reaction dimethylallyl diphosphate + 2 oxidized [2Fe-2S]-[ferredoxin] + H2O = (2E)-4-hydroxy-3-methylbut-2-enyl diphosphate + 2 reduced [2Fe-2S]-[ferredoxin] + 2 H(+). It functions in the pathway isoprenoid biosynthesis; dimethylallyl diphosphate biosynthesis; dimethylallyl diphosphate from (2E)-4-hydroxy-3-methylbutenyl diphosphate: step 1/1. The protein operates within isoprenoid biosynthesis; isopentenyl diphosphate biosynthesis via DXP pathway; isopentenyl diphosphate from 1-deoxy-D-xylulose 5-phosphate: step 6/6. Functionally, catalyzes the conversion of 1-hydroxy-2-methyl-2-(E)-butenyl 4-diphosphate (HMBPP) into a mixture of isopentenyl diphosphate (IPP) and dimethylallyl diphosphate (DMAPP). Acts in the terminal step of the DOXP/MEP pathway for isoprenoid precursor biosynthesis. This chain is 4-hydroxy-3-methylbut-2-enyl diphosphate reductase, found in Pseudomonas syringae pv. tomato (strain ATCC BAA-871 / DC3000).